The sequence spans 45 residues: MNSALFLAKLPEAYAVFKPIVDILPVIPVFFLLLAFVWQAAIGFR.

Residues 1–8 constitute a propeptide that is removed on maturation; sequence MNSALFLA. Residues 23 to 43 traverse the membrane as a helical segment; it reads ILPVIPVFFLLLAFVWQAAIG.

It belongs to the PsbK family. PSII is composed of 1 copy each of membrane proteins PsbA, PsbB, PsbC, PsbD, PsbE, PsbF, PsbH, PsbI, PsbJ, PsbK, PsbL, PsbM, PsbT, PsbX, PsbY, PsbZ, Psb30/Ycf12, at least 3 peripheral proteins of the oxygen-evolving complex and a large number of cofactors. It forms dimeric complexes.

It localises to the plastid. Its subcellular location is the chloroplast thylakoid membrane. One of the components of the core complex of photosystem II (PSII). PSII is a light-driven water:plastoquinone oxidoreductase that uses light energy to abstract electrons from H(2)O, generating O(2) and a proton gradient subsequently used for ATP formation. It consists of a core antenna complex that captures photons, and an electron transfer chain that converts photonic excitation into a charge separation. This chain is Photosystem II reaction center protein K, found in Porphyra purpurea (Red seaweed).